Reading from the N-terminus, the 101-residue chain is MTTNNLVLAGTITRSRRFDSPAGIAHTVLMLEHKSQRYEAEMLRNVYCQIQVVLSGERFNSVTENLKAGVEIQVEGFLNLQQSRNGQNRLVLHAENVELKT.

The 101-residue stretch at 1–101 (MTTNNLVLAG…LHAENVELKT (101 aa)) folds into the SSB domain.

The protein belongs to the PriB family. Homodimer. Interacts with PriA and DnaT. Component of the replication restart primosome. Primosome assembly occurs via a 'hand-off' mechanism. PriA binds to replication forks, subsequently PriB then DnaT bind; DnaT then displaces ssDNA to generate the helicase loading substrate.

Functionally, involved in the restart of stalled replication forks, which reloads the replicative helicase on sites other than the origin of replication; the PriA-PriB pathway is the major replication restart pathway. During primosome assembly it facilitates complex formation between PriA and DnaT on DNA; stabilizes PriA on DNA. Stimulates the DNA unwinding activity of PriA helicase. This is Replication restart protein PriB from Shewanella piezotolerans (strain WP3 / JCM 13877).